We begin with the raw amino-acid sequence, 179 residues long: ADP-ribosylation factor-like protein 5B (179 aa).

Residue G2 is the site of N-myristoyl glycine attachment. GTP-binding positions include 23–30, 66–70, 125–128, and A159; these read GLDNAGKT, DIGGQ, and NKQD.

This sequence belongs to the small GTPase superfamily. Arf family.

In terms of biological role, binds and exchanges GTP and GDP. This is ADP-ribosylation factor-like protein 5B (Arl5b) from Mus musculus (Mouse).